Here is a 185-residue protein sequence, read N- to C-terminus: Ribosome-recycling factor (185 aa).

A disordered region spans residues arginine 143 to serine 163.

Belongs to the RRF family.

The protein resides in the cytoplasm. Functionally, responsible for the release of ribosomes from messenger RNA at the termination of protein biosynthesis. May increase the efficiency of translation by recycling ribosomes from one round of translation to another. The sequence is that of Ribosome-recycling factor from Mycobacterium marinum (strain ATCC BAA-535 / M).